The chain runs to 960 residues: FYVE, RhoGEF and PH domain-containing protein 1 (960 aa).

Disordered stretches follow at residues 1 to 210 (MHGH…SSAA) and 226 to 355 (ASDR…REIP). Phosphoserine is present on Ser-48. The segment covering 125–135 (PHPEGPQRLRS) has biased composition (basic and acidic residues). Composition is skewed to pro residues over residues 137–149 (PGPP…PRPS), 156–165 (GPKPQVPPKP), and 173–190 (VLPP…PLPA). Residues 171–187 (PRVLPPPEPIPPPPSRP) carry the SH3-binding motif. Residue Ser-205 is modified to Phosphoserine. Residues 231–251 (APGPCPVPPEPAMLPQPPPQP) are compositionally biased toward pro residues. Positions 273-284 (RDGEKVPNRDSG) are enriched in basic and acidic residues. The span at 285–294 (IDSISSPSNS) shows a compositional bias: low complexity. The span at 335-350 (VDSDLEEEEEEEEEEK) shows a compositional bias: acidic residues. In terms of domain architecture, DH spans 372-560 (KVFHIANELL…ATAAEHSNAA (189 aa)). The PH 1 domain occupies 589–688 (ELIKEGHILK…WVQAINSTLL (100 aa)). Residues 701-725 (NSTNRDDEDTPPNSPNVDLGKRAPT) form a disordered region. Position 710 is a phosphothreonine (Thr-710). Ser-714 carries the post-translational modification Phosphoserine. The segment at 729–789 (EKEVTMCMRC…VCTDCYVALH (61 aa)) adopts an FYVE-type zinc-finger fold. Zn(2+) is bound by residues Cys-735, Cys-738, Cys-752, Cys-755, Cys-760, Cys-763, Cys-781, and Cys-784. The PH 2 domain occupies 820-920 (NSVICSFLHY…WMAVLGRAGR (101 aa)). Positions 922–960 (DTFCPGPTLSEDKEMEETPVAASGATAEPPEASQTRDKT) are disordered.

In terms of assembly, interacts with DBNL/ABP1 and CTTN. Binds CDC42. May interact with CCPG1.

The protein resides in the cytoplasm. Its subcellular location is the cell projection. It localises to the lamellipodium. The protein localises to the ruffle. It is found in the cytoskeleton. In terms of biological role, activates CDC42, a member of the Ras-like family of Rho- and Rac proteins, by exchanging bound GDP for free GTP. Plays a role in regulating the actin cytoskeleton and cell shape. This is FYVE, RhoGEF and PH domain-containing protein 1 (Fgd1) from Mus musculus (Mouse).